The sequence spans 130 residues: Chemotaxis protein CheY-3 (130 aa).

The Response regulatory domain occupies Lys-10–Phe-127. Asp-15, Asp-16, Asp-60, and Asn-62 together coordinate Mg(2+). Asp-60 carries the 4-aspartylphosphate modification.

In terms of assembly, interacts with FliM. Mg(2+) is required as a cofactor.

It is found in the cytoplasm. In terms of biological role, acts as a response regulator to control chemotaxis. Involved in the transmission of sensory signals from the chemoreceptors to the flagellar motors. Switches the flagellar rotation by binding to the flagellar motor switch protein FliM. In its active (phosphorylated or acetylated) form, exhibits enhanced binding to a switch component, FliM, at the flagellar motor which induces a change from counterclockwise to clockwise flagellar rotation. The chain is Chemotaxis protein CheY-3 from Vibrio cholerae serotype O1 (strain ATCC 39315 / El Tor Inaba N16961).